The following is a 626-amino-acid chain: Chaperone protein HtpG (626 aa).

The tract at residues 1–341 (MRKKKFKAES…SEDLSLNISR (341 aa)) is a; substrate-binding. Residues 342–552 (EMLQHDRQLK…DGEVTIEMEK (211 aa)) form a b region. A c region spans residues 553 to 626 (VLNAMPDSQQ…FTNDICKVMV (74 aa)).

Belongs to the heat shock protein 90 family. As to quaternary structure, homodimer.

The protein localises to the cytoplasm. Its function is as follows. Molecular chaperone. Has ATPase activity. In Bacillus velezensis (strain DSM 23117 / BGSC 10A6 / LMG 26770 / FZB42) (Bacillus amyloliquefaciens subsp. plantarum), this protein is Chaperone protein HtpG.